Here is a 695-residue protein sequence, read N- to C-terminus: Elongation factor G (695 aa).

Positions 12–286 (DKLRNIGIMA…AVIDYLPSPL (275 aa)) constitute a tr-type G domain. GTP contacts are provided by residues 21–28 (AHIDAGKT), 85–89 (DTPGH), and 139–142 (NKMD).

This sequence belongs to the TRAFAC class translation factor GTPase superfamily. Classic translation factor GTPase family. EF-G/EF-2 subfamily.

It localises to the cytoplasm. In terms of biological role, catalyzes the GTP-dependent ribosomal translocation step during translation elongation. During this step, the ribosome changes from the pre-translocational (PRE) to the post-translocational (POST) state as the newly formed A-site-bound peptidyl-tRNA and P-site-bound deacylated tRNA move to the P and E sites, respectively. Catalyzes the coordinated movement of the two tRNA molecules, the mRNA and conformational changes in the ribosome. This Thermotoga sp. (strain RQ2) protein is Elongation factor G.